Reading from the N-terminus, the 98-residue chain is NADH-ubiquinone oxidoreductase chain 4L (98 aa).

3 consecutive transmembrane segments (helical) span residues 1–21 (MSVV…GLLV), 30–50 (LLCL…TVLT), and 61–81 (IILL…LVMI).

Belongs to the complex I subunit 4L family. Core subunit of respiratory chain NADH dehydrogenase (Complex I) which is composed of 45 different subunits.

The protein resides in the mitochondrion inner membrane. The catalysed reaction is a ubiquinone + NADH + 5 H(+)(in) = a ubiquinol + NAD(+) + 4 H(+)(out). Its function is as follows. Core subunit of the mitochondrial membrane respiratory chain NADH dehydrogenase (Complex I) which catalyzes electron transfer from NADH through the respiratory chain, using ubiquinone as an electron acceptor. Part of the enzyme membrane arm which is embedded in the lipid bilayer and involved in proton translocation. The protein is NADH-ubiquinone oxidoreductase chain 4L (MT-ND4L) of Lontra canadensis (North American river otter).